Here is a 191-residue protein sequence, read N- to C-terminus: Protein Ves (191 aa).

This sequence belongs to the Ves family.

This is Protein Ves from Escherichia coli O8 (strain IAI1).